The following is a 712-amino-acid chain: DNA topoisomerase 3 (712 aa).

The Toprim domain maps to Lys2–Thr135. The Mg(2+) site is built by Glu8 and Asp104. Residues Phe152 to Val581 enclose the Topo IA-type catalytic domain. The interval Ser186–Gln191 is interaction with DNA. The active-site O-(5'-phospho-DNA)-tyrosine intermediate is the Tyr305.

This sequence belongs to the type IA topoisomerase family. It depends on Mg(2+) as a cofactor.

It carries out the reaction ATP-independent breakage of single-stranded DNA, followed by passage and rejoining.. In terms of biological role, releases the supercoiling and torsional tension of DNA, which is introduced during the DNA replication and transcription, by transiently cleaving and rejoining one strand of the DNA duplex. Introduces a single-strand break via transesterification at a target site in duplex DNA. The scissile phosphodiester is attacked by the catalytic tyrosine of the enzyme, resulting in the formation of a DNA-(5'-phosphotyrosyl)-enzyme intermediate and the expulsion of a 3'-OH DNA strand. The free DNA strand then undergoes passage around the unbroken strand, thus removing DNA supercoils. Finally, in the religation step, the DNA 3'-OH attacks the covalent intermediate to expel the active-site tyrosine and restore the DNA phosphodiester backbone. This Staphylococcus saprophyticus subsp. saprophyticus (strain ATCC 15305 / DSM 20229 / NCIMB 8711 / NCTC 7292 / S-41) protein is DNA topoisomerase 3.